The sequence spans 97 residues: Large ribosomal subunit protein eL21 (97 aa).

It belongs to the eukaryotic ribosomal protein eL21 family.

The polypeptide is Large ribosomal subunit protein eL21 (Methanosarcina mazei (strain ATCC BAA-159 / DSM 3647 / Goe1 / Go1 / JCM 11833 / OCM 88) (Methanosarcina frisia)).